The following is a 322-amino-acid chain: Altered inheritance of mitochondria protein 32 (322 aa).

Belongs to the AIM32 family.

The protein is Altered inheritance of mitochondria protein 32 (AIM32) of Kluyveromyces lactis (strain ATCC 8585 / CBS 2359 / DSM 70799 / NBRC 1267 / NRRL Y-1140 / WM37) (Yeast).